Here is a 431-residue protein sequence, read N- to C-terminus: Glutamyl-tRNA(Gln) amidotransferase subunit A (431 aa).

Catalysis depends on charge relay system residues K55 and S130. S154 functions as the Acyl-ester intermediate in the catalytic mechanism.

Belongs to the amidase family. GatA subfamily. In terms of assembly, heterotrimer of A, B and C subunits.

The catalysed reaction is L-glutamyl-tRNA(Gln) + L-glutamine + ATP + H2O = L-glutaminyl-tRNA(Gln) + L-glutamate + ADP + phosphate + H(+). Functionally, allows the formation of correctly charged Gln-tRNA(Gln) through the transamidation of misacylated Glu-tRNA(Gln) in organisms which lack glutaminyl-tRNA synthetase. The reaction takes place in the presence of glutamine and ATP through an activated gamma-phospho-Glu-tRNA(Gln). In Methanococcus vannielii (strain ATCC 35089 / DSM 1224 / JCM 13029 / OCM 148 / SB), this protein is Glutamyl-tRNA(Gln) amidotransferase subunit A.